Reading from the N-terminus, the 117-residue chain is Large ribosomal subunit protein uL18 (117 aa).

It belongs to the universal ribosomal protein uL18 family. As to quaternary structure, part of the 50S ribosomal subunit; part of the 5S rRNA/L5/L18/L25 subcomplex. Contacts the 5S and 23S rRNAs.

Functionally, this is one of the proteins that bind and probably mediate the attachment of the 5S RNA into the large ribosomal subunit, where it forms part of the central protuberance. The chain is Large ribosomal subunit protein uL18 from Phytoplasma australiense.